A 135-amino-acid chain; its full sequence is MACGLVASNLNLKPGECLRVRGELAADAKSFVLNLGKDSNNLCLHFNPRFNAHGDANTIVCNSKDDGTWGAEQREVAFPFQPGSVVEVCISFNQADLTVKLPDGHEFKFPNRLNMEAINYMSADGDFKIKCVAFE.

Ala2 bears the N-acetylalanine mark. The 132-residue stretch at 4 to 135 folds into the Galectin domain; it reads GLVASNLNLK…DFKIKCVAFE (132 aa). Residues Lys13 and Lys29 each carry the N6-acetyllysine modification. Phosphoserine is present on Ser30. Residues 45–49, His53, Asn62, and 69–72 each bind a beta-D-galactoside; these read HFNPR and WGAE. Position 108 is an N6-acetyllysine; alternate (Lys108). An N6-succinyllysine; alternate modification is found at Lys108. An N6-acetyllysine modification is found at Lys128.

Homodimer. Binds LGALS3BP. Interacts with CD2, CD3, CD4, CD6, CD7, CD43, ALCAM and CD45. Interacts with laminin (via poly-N-acetyllactosamine). Interacts with SUSD2. Interacts with cargo receptor TMED10; the interaction mediates the translocation from the cytoplasm into the ERGIC (endoplasmic reticulum-Golgi intermediate compartment) and thereby secretion.

The protein resides in the secreted. The protein localises to the extracellular space. Its subcellular location is the extracellular matrix. It is found in the cytoplasm. Functionally, lectin that binds beta-galactoside and a wide array of complex carbohydrates. Plays a role in regulating apoptosis, cell proliferation and cell differentiation. Inhibits CD45 protein phosphatase activity and therefore the dephosphorylation of Lyn kinase. Strong inducer of T-cell apoptosis. Has hemagglutinating activity towards human erythrocytes. The polypeptide is Galectin-1 (Capra hircus (Goat)).